The chain runs to 89 residues: Protein FAM25A (89 aa).

It belongs to the FAM25 family.

This chain is Protein FAM25A, found in Homo sapiens (Human).